The sequence spans 192 residues: dTTP/UTP pyrophosphatase (192 aa).

Aspartate 71 acts as the Proton acceptor in catalysis.

The protein belongs to the Maf family. YhdE subfamily. Requires a divalent metal cation as cofactor.

It localises to the cytoplasm. It catalyses the reaction dTTP + H2O = dTMP + diphosphate + H(+). It carries out the reaction UTP + H2O = UMP + diphosphate + H(+). Its function is as follows. Nucleoside triphosphate pyrophosphatase that hydrolyzes dTTP and UTP. May have a dual role in cell division arrest and in preventing the incorporation of modified nucleotides into cellular nucleic acids. This Clostridium tetani (strain Massachusetts / E88) protein is dTTP/UTP pyrophosphatase.